The following is a 1780-amino-acid chain: Callose synthase 12 (1780 aa).

Topologically, residues 1–302 are cytoplasmic; the sequence is MSLRHRTVPP…ERRTFFYLYR (302 aa). Residues 303–323 form a helical membrane-spanning segment; it reads SFDRLWVMLALFLQAAIIVAW. The Extracellular segment spans residues 324 to 348; that stretch reads EEKPDTSSVTRQLWNALKARDVQVR. A helical membrane pass occupies residues 349 to 369; that stretch reads LLTVFLTWSGMRLLQAVLDAA. Residues 370-386 are Cytoplasmic-facing; the sequence is SQYPLVSRETKRHFFRM. A helical membrane pass occupies residues 387 to 407; the sequence is LMKVIAAAVWIVAFTVLYTNI. Over 408-427 the chain is Extracellular; sequence WKQKRQDRQWSNAATTKIYQ. A helical transmembrane segment spans residues 428 to 448; sequence FLYAVGAFLVPEILALALFII. Over 449–489 the chain is Cytoplasmic; the sequence is PWMRNFLEETNWKIFFALTWWFQGKSFVGRGLREGLVDNIK. The chain crosses the membrane as a helical span at residues 490-510; sequence YSTFWIFVLATKFTFSYFLQV. Over 511–542 the chain is Extracellular; it reads KPMIKPSKLLWNLKDVDYEWHQFYGDSNRFSV. Residues 543 to 563 form a helical membrane-spanning segment; the sequence is ALLWLPVVLIYLMDIQIWYAI. Over 564–1348 the chain is Cytoplasmic; that stretch reads YSSIVGAVVG…FFRMLSFFYT (785 aa). A helical transmembrane segment spans residues 1349–1369; sequence TVGFFFNTMMVILTVYAFLWG. Residues 1370–1394 lie on the Extracellular side of the membrane; the sequence is RVYLALSGVEKSALADSTDTNAALG. A helical membrane pass occupies residues 1395 to 1415; that stretch reads VILNQQFIIQLGLFTALPMIV. Residues 1416–1421 lie on the Cytoplasmic side of the membrane; that stretch reads EWSLEE. A helical transmembrane segment spans residues 1422–1442; sequence GFLLAIWNFIRMQIQLSAVFY. The Extracellular segment spans residues 1443–1489; the sequence is TFSMGTRAHYFGRTILHGGAKYRATGRGFVVEHKGFTENYRLYARSH. Residues 1490–1510 form a helical membrane-spanning segment; it reads FVKAIELGLILIVYASHSPIA. Topologically, residues 1511 to 1516 are cytoplasmic; that stretch reads KDSLIY. The helical transmembrane segment at 1517-1537 threads the bilayer; it reads IAMTITSWFLVISWIMAPFVF. Residues 1538 to 1588 are Extracellular-facing; it reads NPSGFDWLKTVYDFEDFMNWIWYQGRISTKSEQSWEKWWYEEQDHLRNTGK. A helical transmembrane segment spans residues 1589–1609; that stretch reads AGLFVEIILVLRFFFFQYGIV. Topologically, residues 1610 to 1620 are cytoplasmic; sequence YQLKIANGSTS. A helical transmembrane segment spans residues 1621 to 1641; sequence LFVYLFSWIYIFAIFVLFLVI. Over 1642 to 1657 the chain is Extracellular; that stretch reads QYARDKYSAKAHIRYR. Residues 1658–1678 traverse the membrane as a helical segment; sequence LVQFLLIVLAILVIVALLEFT. Residues 1679 to 1681 are Cytoplasmic-facing; that stretch reads HFS. Residues 1682 to 1702 traverse the membrane as a helical segment; that stretch reads FIDIFTSLLAFIPTGWGILLI. The Extracellular segment spans residues 1703 to 1728; the sequence is AQTQRKWLKNYTIFWNAVVSVARMYD. A glycan (N-linked (GlcNAc...) asparagine) is linked at Asn-1712. A helical membrane pass occupies residues 1729 to 1749; that stretch reads ILFGILIMVPVAFLSWMPGFQ. Residues 1750–1780 are Cytoplasmic-facing; sequence SMQTRILFNEAFSRGLRIMQIVTGKKSKGDV.

Belongs to the glycosyltransferase 48 family. Highly expressed in flowers. Expressed at low levels in roots, leaves, stems, cauline leaves and siliques.

It localises to the cell membrane. The enzyme catalyses [(1-&gt;3)-beta-D-glucosyl](n) + UDP-alpha-D-glucose = [(1-&gt;3)-beta-D-glucosyl](n+1) + UDP + H(+). Functionally, involved in sporophytic and gametophytic development. Required for normal leaf development. During pollen formation, required for the formation of the callose wall separating the tetraspores of the tetrad (interstitial wall), but not for the callose wall surrounding the pollen mother cells (peripheral wall). Functionally redudant to CALS11 (GSL1). May play a role later in pollen grain maturation. Required for callose formation induced by wounding and pathogen attack. May interfere with salicylic acid-induced signaling pathway during defense response. During plant growth and development, callose is found as a transitory component of the cell plate in dividing cells, is a major component of pollen mother cell walls and pollen tubes, and is found as a structural component of plasmodesmatal canals. This Arabidopsis thaliana (Mouse-ear cress) protein is Callose synthase 12 (CALS12).